Consider the following 1305-residue polypeptide: Cyclin-G-associated kinase (1305 aa).

Residue serine 2 is modified to N-acetylserine. Phosphoserine occurs at positions 2 and 16. Residues 40–315 form the Protein kinase domain; the sequence is LRVRRVLAEG…IAEVVRQLQE (276 aa). Aspartate 173 functions as the Proton acceptor in the catalytic mechanism. A disordered region spans residues 332 to 354; sequence LEQNGGYGNSGPSRAQPPSGGPV. Positions 397–564 constitute a Phosphatase tensin-type domain; sequence SVANYAKGDL…EYVCDMVAEE (168 aa). Residue serine 454 is modified to Phosphoserine. The region spanning 570–708 is the C2 tensin-type domain; that stretch reads SKPMLVKSVV…FQVNLEVEVE (139 aa). A disordered region spans residues 747–856; it reads FGKPELPRQP…TPRLAAGTRQ (110 aa). Serine 768 is modified (phosphoserine). Threonine 774 is subject to Phosphothreonine. The span at 776–789 shows a compositional bias: polar residues; it reads SDSPQSSSTDTNHF. Serine 781 carries the post-translational modification Phosphoserine. Threonine 792 bears the Phosphothreonine mark. Polar residues predominate over residues 805 to 817; sequence VDNTSPKESQSNL. Residues serine 809, serine 824, and serine 827 each carry the phosphoserine modification. The segment covering 822–832 has biased composition (acidic residues); that stretch reads DGSEVSDEEEA. A compositionally biased stretch (basic and acidic residues) spans 836–848; the sequence is SEERKPGAGEDTP. Serine 938 carries the phosphoserine modification. Residues 1044–1141 form a disordered region; sequence LPGPASMPVP…PQAKPAPRAS (98 aa). The span at 1105-1131 shows a compositional bias: polar residues; the sequence is VGTSATTHKSNSSWQTTRPTAPGTSWP. At arginine 1122 the chain carries Omega-N-methylarginine. Serine 1171 bears the Phosphoserine mark. Residues 1241–1305 enclose the J domain; it reads SRWTPVSMAD…FENQGSRPLF (65 aa).

This sequence belongs to the protein kinase superfamily. Ser/Thr protein kinase family.

The protein resides in the cytoplasm. Its subcellular location is the perinuclear region. The protein localises to the golgi apparatus. It localises to the trans-Golgi network. It is found in the cell junction. The protein resides in the focal adhesion. Its subcellular location is the cytoplasmic vesicle. The protein localises to the clathrin-coated vesicle. The enzyme catalyses L-seryl-[protein] + ATP = O-phospho-L-seryl-[protein] + ADP + H(+). It carries out the reaction L-threonyl-[protein] + ATP = O-phospho-L-threonyl-[protein] + ADP + H(+). Functionally, associates with cyclin G and CDK5. Seems to act as an auxilin homolog that is involved in the uncoating of clathrin-coated vesicles by Hsc70 in non-neuronal cells. Expression oscillates slightly during the cell cycle, peaking at G1. May play a role in clathrin-mediated endocytosis and intracellular trafficking, and in the dynamics of clathrin assembly/disassembly. The sequence is that of Cyclin-G-associated kinase from Rattus norvegicus (Rat).